The sequence spans 311 residues: Heparan sulfate glucosamine 3-O-sulfotransferase 1 (311 aa).

The N-terminal stretch at 1 to 20 (MTLLLLGAVLLVAQPQLVHS) is a signal peptide. Asn52 is a glycosylation site (N-linked (GlcNAc...) asparagine). 3'-phosphoadenylyl sulfate-binding positions include 68-72 (KGGTR), Arg151, and Ser159. N-linked (GlcNAc...) asparagine glycosylation is found at Asn196, Asn246, and Asn253. Tyr259 serves as a coordination point for 3'-phosphoadenylyl sulfate. The cysteines at positions 260 and 269 are disulfide-linked. 274–278 (KGRAH) is a binding site for 3'-phosphoadenylyl sulfate.

Belongs to the sulfotransferase 1 family.

It is found in the golgi apparatus lumen. The enzyme catalyses alpha-D-glucosaminyl-[heparan sulfate](n) + 3'-phosphoadenylyl sulfate = 3-sulfo-alpha-D-glucosaminyl-[heparan sulfate](n) + adenosine 3',5'-bisphosphate + H(+). Its function is as follows. Sulfotransferase that utilizes 3'-phospho-5'-adenylyl sulfate (PAPS) to catalyze the transfer of a sulfo group to position 3 of glucosamine residues in heparan. Catalyzes the rate limiting step in the biosynthesis of heparan sulfate (HSact). This modification is a crucial step in the biosynthesis of anticoagulant heparan sulfate as it completes the structure of the antithrombin pentasaccharide binding site. The chain is Heparan sulfate glucosamine 3-O-sulfotransferase 1 (Hs3st1) from Mus musculus (Mouse).